The following is a 259-amino-acid chain: 5'-nucleotidase SurE (259 aa).

Residues Asp8, Asp9, Ser39, and Asn95 each coordinate a divalent metal cation.

It belongs to the SurE nucleotidase family. It depends on a divalent metal cation as a cofactor.

The protein resides in the cytoplasm. The catalysed reaction is a ribonucleoside 5'-phosphate + H2O = a ribonucleoside + phosphate. Nucleotidase that shows phosphatase activity on nucleoside 5'-monophosphates. The sequence is that of 5'-nucleotidase SurE from Pseudothermotoga lettingae (strain ATCC BAA-301 / DSM 14385 / NBRC 107922 / TMO) (Thermotoga lettingae).